The primary structure comprises 385 residues: Probable caffeine synthase MTL2 (385 aa).

Tyrosine 18, cysteine 62, asparagine 67, aspartate 101, leucine 102, serine 140, phenylalanine 141, and cysteine 157 together coordinate S-adenosyl-L-homocysteine. Residues tyrosine 158, histidine 161, and tryptophan 162 each coordinate caffeine. Mg(2+) is bound at residue asparagine 179. Residue threonine 238 participates in caffeine binding. 3 residues coordinate Mg(2+): aspartate 261, phenylalanine 263, and asparagine 264. Tyrosine 369 is a binding site for caffeine.

The protein belongs to the methyltransferase superfamily. Type-7 methyltransferase family. It depends on Mg(2+) as a cofactor.

The protein operates within alkaloid biosynthesis. In terms of biological role, may be involved in the biosynthesis of caffeine. The sequence is that of Probable caffeine synthase MTL2 from Coffea canephora (Robusta coffee).